Consider the following 555-residue polypeptide: Potassium-transporting ATPase potassium-binding subunit (555 aa).

10 consecutive transmembrane segments (helical) span residues 2–22, 60–80, 130–150, 173–193, 246–266, 278–298, 374–394, 412–432, 483–503, and 525–545; these read IWVAVVITMLLFILVAKPTGI, QYALSLVLLNGFMIVVVYFIF, IGITFLMFAAPATTLALVMAF, VFLPIAFMAALVFVALGVPQT, MSNILQMMLMMLLPTALPFTY, ILFVSLFMVFLLGFITITTSE, AGFVNIIMYAIIAVFISGLMV, LIAVTILFHPLLILGFSALAL, LVMFLGRYFSLITMLAVAASL, and GIFIGTIVIVGALTFFPMLVL.

Belongs to the KdpA family. In terms of assembly, the system is composed of three essential subunits: KdpA, KdpB and KdpC.

The protein localises to the cell membrane. Its function is as follows. Part of the high-affinity ATP-driven potassium transport (or Kdp) system, which catalyzes the hydrolysis of ATP coupled with the electrogenic transport of potassium into the cytoplasm. This subunit binds the extracellular potassium ions and delivers the ions to the membrane domain of KdpB through an intramembrane tunnel. The sequence is that of Potassium-transporting ATPase potassium-binding subunit from Bacillus anthracis (strain A0248).